The following is a 150-amino-acid chain: Cytochrome c oxidase subunit 5A, mitochondrial (150 aa).

A mitochondrion-targeting transit peptide spans 1–41 (MLGAALRRCAVAATTWAGPRGLLHSARTPGPAAAIQSVRCY). The short motif at 2-17 (LGAALRRCAVAATTWA) is the SIFI-degron element. 2 positions are modified to N6-acetyllysine: K87 and K113. T141 carries the phosphothreonine modification.

This sequence belongs to the cytochrome c oxidase subunit 5A family. In terms of assembly, component of the cytochrome c oxidase (complex IV, CIV), a multisubunit enzyme composed of 14 subunits. The complex is composed of a catalytic core of 3 subunits MT-CO1, MT-CO2 and MT-CO3, encoded in the mitochondrial DNA, and 11 supernumerary subunits COX4I, COX5A, COX5B, COX6A, COX6B, COX6C, COX7A, COX7B, COX7C, COX8 and NDUFA4, which are encoded in the nuclear genome. The complex exists as a monomer or a dimer and forms supercomplexes (SCs) in the inner mitochondrial membrane with NADH-ubiquinone oxidoreductase (complex I, CI) and ubiquinol-cytochrome c oxidoreductase (cytochrome b-c1 complex, complex III, CIII), resulting in different assemblies (supercomplex SCI(1)III(2)IV(1) and megacomplex MCI(2)III(2)IV(2)). Interacts with AFG1L. Interacts with RAB5IF. In terms of processing, in response to mitochondrial stress, the precursor protein is ubiquitinated by the SIFI complex in the cytoplasm before mitochondrial import, leading to its degradation. Within the SIFI complex, UBR4 initiates ubiquitin chain that are further elongated or branched by KCMF1.

Its subcellular location is the mitochondrion inner membrane. Its pathway is energy metabolism; oxidative phosphorylation. Component of the cytochrome c oxidase, the last enzyme in the mitochondrial electron transport chain which drives oxidative phosphorylation. The respiratory chain contains 3 multisubunit complexes succinate dehydrogenase (complex II, CII), ubiquinol-cytochrome c oxidoreductase (cytochrome b-c1 complex, complex III, CIII) and cytochrome c oxidase (complex IV, CIV), that cooperate to transfer electrons derived from NADH and succinate to molecular oxygen, creating an electrochemical gradient over the inner membrane that drives transmembrane transport and the ATP synthase. Cytochrome c oxidase is the component of the respiratory chain that catalyzes the reduction of oxygen to water. Electrons originating from reduced cytochrome c in the intermembrane space (IMS) are transferred via the dinuclear copper A center (CU(A)) of subunit 2 and heme A of subunit 1 to the active site in subunit 1, a binuclear center (BNC) formed by heme A3 and copper B (CU(B)). The BNC reduces molecular oxygen to 2 water molecules using 4 electrons from cytochrome c in the IMS and 4 protons from the mitochondrial matrix. This chain is Cytochrome c oxidase subunit 5A, mitochondrial (COX5A), found in Papio anubis (Olive baboon).